The following is a 50-amino-acid chain: Sperm protamine P1 (50 aa).

It belongs to the protamine P1 family. In terms of tissue distribution, testis.

The protein localises to the nucleus. It is found in the chromosome. Its function is as follows. Protamines substitute for histones in the chromatin of sperm during the haploid phase of spermatogenesis. They compact sperm DNA into a highly condensed, stable and inactive complex. This Trachypithecus phayrei (Phayre's leaf monkey) protein is Sperm protamine P1 (PRM1).